The following is a 393-amino-acid chain: Elongation factor Tu (393 aa).

One can recognise a tr-type G domain in the interval 10-203; the sequence is KPHVNIGTIG…AVDSYIPEPV (194 aa). The G1 stretch occupies residues 19–26; that stretch reads GHVDHGKT. Position 19–26 (19–26) interacts with GTP; sequence GHVDHGKT. Threonine 26 lines the Mg(2+) pocket. The interval 60–64 is G2; sequence GITIS. A G3 region spans residues 81–84; it reads DCPG. Residues 81-85 and 136-139 contribute to the GTP site; these read DCPGH and NKVD. The segment at 136 to 139 is G4; sequence NKVD. A G5 region spans residues 173 to 175; that stretch reads SAL.

It belongs to the TRAFAC class translation factor GTPase superfamily. Classic translation factor GTPase family. EF-Tu/EF-1A subfamily. As to quaternary structure, monomer.

Its subcellular location is the cytoplasm. It catalyses the reaction GTP + H2O = GDP + phosphate + H(+). Functionally, GTP hydrolase that promotes the GTP-dependent binding of aminoacyl-tRNA to the A-site of ribosomes during protein biosynthesis. This Prosthecochloris aestuarii (strain DSM 271 / SK 413) protein is Elongation factor Tu.